The sequence spans 275 residues: MANIKLKNYQSYAKINLFLHILNKRDDGYHNLQTWFTFLDLKDHISFRFNNSNKIEITSNIQIASKEDNLIYKAVKEFQEAYNIESIGVDIDIIKNIPMGAGLGGGSSNAATTLIALRDYYLPELSNEQMIPLATKLGADVPIFVYGRSAWAEGIGDVLYSKDFEQQYVVLVKPNIHISTKEFFESENLVKTKNMLPRDLSFDTSVMHNDFENVFFAKYPEFKSQLDEIDQDFRMTGTGSCFYLLSKDLNKLQQLARKVDKSLDKWVVKTLNYAY.

Residue K14 is part of the active site. ATP is bound at residue 98–108 (PMGAGLGGGSS). The active site involves D140.

Belongs to the GHMP kinase family. IspE subfamily.

The enzyme catalyses 4-CDP-2-C-methyl-D-erythritol + ATP = 4-CDP-2-C-methyl-D-erythritol 2-phosphate + ADP + H(+). It functions in the pathway isoprenoid biosynthesis; isopentenyl diphosphate biosynthesis via DXP pathway; isopentenyl diphosphate from 1-deoxy-D-xylulose 5-phosphate: step 3/6. Catalyzes the phosphorylation of the position 2 hydroxy group of 4-diphosphocytidyl-2C-methyl-D-erythritol. The sequence is that of 4-diphosphocytidyl-2-C-methyl-D-erythritol kinase from Francisella philomiragia subsp. philomiragia (strain ATCC 25017 / CCUG 19701 / FSC 153 / O#319-036).